Here is a 470-residue protein sequence, read N- to C-terminus: Sperm-associated antigen 8 (470 aa).

The segment covering 1-21 (METTESTEGSLSRSCDVQPSS) has biased composition (polar residues). Disordered stretches follow at residues 1–70 (METT…PPAH), 117–178 (SGTC…GQGP), and 302–321 (LTTQPQSPMSSSTTQRDSYQ). Residues 27 to 48 (PSEPVPSSSSSPRSTAPAEAPA) show a composition bias toward low complexity. Polar residues predominate over residues 51–60 (SVLTEPSSDS). Low complexity-rich tracts occupy residues 122 to 175 (LGQS…ADPG) and 303 to 316 (TTQPQSPMSSSTTQ). Mn regions lie at residues 312–325 (SSTTQRDSYQLPRH) and 364–378 (ESVTHHDYRVELVRA).

This sequence belongs to the SPAG8 family. Microtubule inner protein component of sperm flagellar doublet microtubules. Interacts with FHL5 (via second LIM domain). Interacts with RANBP9. Expressed in testis (at protein level). Not detected in brain, heart, kidney, spleen, liver, lung, thymus and colon (at protein level).

Its subcellular location is the cytoplasm. It localises to the nucleus. The protein resides in the cytoplasmic vesicle. The protein localises to the secretory vesicle. It is found in the acrosome. Its subcellular location is the cytoskeleton. It localises to the microtubule organizing center. The protein resides in the spindle. The protein localises to the cilium axoneme. It is found in the flagellum axoneme. Microtubule inner protein (MIP) part of the dynein-decorated doublet microtubules (DMTs) in cilia axoneme, which is required for motile cilia beating. Plays a role in spermatogenesis by enhancing the binding of CREM isoform tau to its coactivator FHL5 and increasing the FHL5-regulated transcriptional activation of CREM isoform tau. Involved in the acrosome reaction and in binding of sperm to the zona pellucida. Plays a role in regulation of the cell cycle by controlling progression through the G2/M phase, possibly by delaying the activation of CDK1 which is required for entry into mitosis. May play a role in fertility and microtubule formation through interaction with RANBP9. The polypeptide is Sperm-associated antigen 8 (Mus musculus (Mouse)).